Here is a 144-residue protein sequence, read N- to C-terminus: Kunitz-type elastase inhibitor BrEI (144 aa).

Residue asparagine 38 is glycosylated (N-linked (GlcNAc...) asparagine). A disulfide bridge links cysteine 41 with cysteine 88.

The protein belongs to the leguminous Kunitz-type inhibitor family.

Inhibitor of porcine pancreatic elastase with a Ki of 27 nM. Does not inhibit human neutrophil elastase, bovine trypsin, human plasma kallikrein or porcine pancreatic kallikrein. In Bauhinia rufa (Orchid tree), this protein is Kunitz-type elastase inhibitor BrEI.